The chain runs to 249 residues: NAD kinase (249 aa).

Asp49 acts as the Proton acceptor in catalysis. Residues Asp49 to Gly50, Arg54, Asn115 to Glu116, Lys126, Arg143, Asp145, Ile153, Thr156 to Ser161, Ala180, and Gln211 each bind NAD(+).

The protein belongs to the NAD kinase family. Homotetramer. A divalent metal cation serves as cofactor.

The protein localises to the cytoplasm. It carries out the reaction NAD(+) + ATP = ADP + NADP(+) + H(+). Involved in the regulation of the intracellular balance between NAD(H) and NADP(H), and is a key enzyme in the biosynthesis of NADP. Catalyzes specifically the phosphorylation on 2'-hydroxyl of the adenosine moiety of NAD to yield NADP. The polypeptide is NAD kinase (Archaeoglobus fulgidus (strain ATCC 49558 / DSM 4304 / JCM 9628 / NBRC 100126 / VC-16)).